We begin with the raw amino-acid sequence, 468 residues long: ATP synthase subunit beta (468 aa).

153-160 (GGAGVGKT) serves as a coordination point for ATP.

The protein belongs to the ATPase alpha/beta chains family. F-type ATPases have 2 components, CF(1) - the catalytic core - and CF(0) - the membrane proton channel. CF(1) has five subunits: alpha(3), beta(3), gamma(1), delta(1), epsilon(1). CF(0) has three main subunits: a(1), b(2) and c(9-12). The alpha and beta chains form an alternating ring which encloses part of the gamma chain. CF(1) is attached to CF(0) by a central stalk formed by the gamma and epsilon chains, while a peripheral stalk is formed by the delta and b chains.

It is found in the cell membrane. The enzyme catalyses ATP + H2O + 4 H(+)(in) = ADP + phosphate + 5 H(+)(out). Its function is as follows. Produces ATP from ADP in the presence of a proton gradient across the membrane. The catalytic sites are hosted primarily by the beta subunits. The polypeptide is ATP synthase subunit beta (Ligilactobacillus salivarius (strain UCC118) (Lactobacillus salivarius)).